We begin with the raw amino-acid sequence, 160 residues long: Myosin regulatory light chain, smooth muscle (160 aa).

Serine 1 carries the blocked amino end (Ser) modification. The residue at position 11 (serine 11) is a Phosphoserine. EF-hand domains are found at residues 20-55 (NQIQEMKEAFTMIDQNRDGLIDVSDLKEMYSNLGTA) and 88-123 (DPEETLRNAFQMFDSDNTGYIPEEYMKDLLENMGDN). Ca(2+)-binding residues include aspartate 33, asparagine 35, aspartate 37, and aspartate 44.

In terms of biological role, in molluscan muscle, calcium regulation is associated with myosin rather than with actin. Muscle myosin contains two types of light chains: the catalytic light chain, essential for ATPase activity, and the regulatory light chain, a calcium-binding protein responsible for Ca(2+) dependent binding and Ca(2+) dependent Mg-ATPase activity. This Spisula sachalinensis (Sakhalin surf-clam) protein is Myosin regulatory light chain, smooth muscle.